The primary structure comprises 383 residues: Chaperone protein DnaJ (383 aa).

Residues 6 to 70 (DYYDVLGVGR…QKRAAYDQYG (65 aa)) form the J domain. Residues 140–222 (GKETKISYSR…CHGTGREEER (83 aa)) form a CR-type zinc finger. The Zn(2+) site is built by Cys-153, Cys-156, Cys-170, Cys-173, Cys-196, Cys-199, Cys-210, and Cys-213. 4 CXXCXGXG motif repeats span residues 153 to 160 (CHTCHGSG), 170 to 177 (CHKCHGAG), 196 to 203 (CDVCGGTG), and 210 to 217 (CDTCHGTG).

Belongs to the DnaJ family. As to quaternary structure, homodimer. It depends on Zn(2+) as a cofactor.

Its subcellular location is the cytoplasm. Participates actively in the response to hyperosmotic and heat shock by preventing the aggregation of stress-denatured proteins and by disaggregating proteins, also in an autonomous, DnaK-independent fashion. Unfolded proteins bind initially to DnaJ; upon interaction with the DnaJ-bound protein, DnaK hydrolyzes its bound ATP, resulting in the formation of a stable complex. GrpE releases ADP from DnaK; ATP binding to DnaK triggers the release of the substrate protein, thus completing the reaction cycle. Several rounds of ATP-dependent interactions between DnaJ, DnaK and GrpE are required for fully efficient folding. Also involved, together with DnaK and GrpE, in the DNA replication of plasmids through activation of initiation proteins. This Latilactobacillus sakei subsp. sakei (strain 23K) (Lactobacillus sakei subsp. sakei) protein is Chaperone protein DnaJ.